Reading from the N-terminus, the 59-residue chain is MKAFYGILIIFILISMIHLSQQVFINATCTLTSQCRPKCLEAIGRPNSKCINRKCKCYP.

Positions 1–22 (MKAFYGILIIFILISMIHLSQQ) are cleaved as a signal peptide. Cystine bridges form between Cys-29–Cys-50, Cys-35–Cys-55, and Cys-39–Cys-57.

The protein belongs to the short scorpion toxin superfamily. Potassium channel inhibitor family. Alpha-KTx 04 subfamily. As to expression, expressed by the venom gland.

It is found in the secreted. Potently blocks Kv1.1/KCNA1 (85%), Kv1.2/KCNA2 (91%), Kv1.3/KCNA3 (89%), Kv1.6/KCNA6 (94%), and Shaker (97%). The chain is Putative potassium channel toxin Ts24 from Tityus serrulatus (Brazilian scorpion).